The sequence spans 168 residues: uncharacterized protein (168 aa).

The or 19 signal peptide spans 1 to 21 (MKLLKALAVLSLATISSHSFA).

This is an uncharacterized protein from Haemophilus influenzae (strain ATCC 51907 / DSM 11121 / KW20 / Rd).